The primary structure comprises 342 residues: MERYEVMRDIGSGNFGVAKLVRDVATNHLFAVKFIERGLKIDEHVQREIMNHRSLKHPNIIRFKEVVLTPTHLAIVMEYAAGGELFERICNAGRFSEDEARFFFQQLISGVSYCHSMQVCHRDLKLENTLLDGSVTPRLKICDFGYSKSSVLHSQPKSTVGTPAYIAPEVLSRKEYDGKVADVWSCGVTLYVMLVGAYPFEDPDDPRNFRKTITRILSVQYSIPDYVRVSADCRHLLSRIFVGNPEQRITIPEIKNHPWFLKNLPIEMTDEYQRSMQLADMNTPSQSLEEVMAIIQEARKPGDAMKLAGAGQVACLGSMDLDDIDDIDDIDIENSGDFVCAL.

Residues 4–260 (YEVMRDIGSG…IPEIKNHPWF (257 aa)) form the Protein kinase domain. ATP-binding positions include 10–18 (IGSGNFGVA) and Lys-33. Asp-123 (proton acceptor) is an active-site residue. Residues 253-342 (EIKNHPWFLK…ENSGDFVCAL (90 aa)) form a C-terminal region.

This sequence belongs to the protein kinase superfamily. Ser/Thr protein kinase family. Post-translationally, phosphorylated. As to expression, expressed in leaf blades, leaf sheaths and roots. Expressed in shoots and roots of young seedlings.

It carries out the reaction L-seryl-[protein] + ATP = O-phospho-L-seryl-[protein] + ADP + H(+). It catalyses the reaction L-threonyl-[protein] + ATP = O-phospho-L-threonyl-[protein] + ADP + H(+). Its activity is regulated as follows. Activated by phosphorylation in response to hyperosmotic stress within 5 minutes. In terms of biological role, may play a role in signal transduction of hyperosmotic response. The sequence is that of Serine/threonine-protein kinase SAPK1 (SAPK1) from Oryza sativa subsp. japonica (Rice).